Reading from the N-terminus, the 374-residue chain is Alcohol dehydrogenase class-3 (374 aa).

An N-acetylalanine modification is found at Ala-2. Residues Cys-45, His-67, Cys-97, Cys-100, Cys-103, Cys-111, and Cys-174 each contribute to the Zn(2+) site. At Lys-233 the chain carries N6-succinyllysine. Position 247 is a phosphoserine (Ser-247). An N6-succinyllysine modification is found at Lys-315. Phosphoserine is present on residues Ser-324 and Ser-351.

The protein belongs to the zinc-containing alcohol dehydrogenase family. Class-III subfamily. As to quaternary structure, homodimer. Zn(2+) serves as cofactor. In terms of tissue distribution, ubiquitous.

It localises to the cytoplasm. The catalysed reaction is a primary alcohol + NAD(+) = an aldehyde + NADH + H(+). The enzyme catalyses a secondary alcohol + NAD(+) = a ketone + NADH + H(+). It carries out the reaction S-(hydroxymethyl)glutathione + NADP(+) = S-formylglutathione + NADPH + H(+). It catalyses the reaction S-(hydroxymethyl)glutathione + NAD(+) = S-formylglutathione + NADH + H(+). The catalysed reaction is 20-oxo-(5Z,8Z,11Z,14Z)-eicosatetraenoate + NAD(+) + H2O = (5Z,8Z,11Z,14Z)-eicosatetraenedioate + NADH + 2 H(+). The enzyme catalyses 20-hydroxy-(5Z,8Z,11Z,14Z)-eicosatetraenoate + NAD(+) = 20-oxo-(5Z,8Z,11Z,14Z)-eicosatetraenoate + NADH + H(+). It carries out the reaction S-nitrosoglutathione + NADH + H(+) = S-(hydroxysulfenamide)glutathione + NAD(+). Its function is as follows. Catalyzes the oxidation of long-chain primary alcohols and the oxidation of S-(hydroxymethyl) glutathione. Also oxidizes long chain omega-hydroxy fatty acids, such as 20-HETE, producing both the intermediate aldehyde, 20-oxoarachidonate and the end product, a dicarboxylic acid, (5Z,8Z,11Z,14Z)-eicosatetraenedioate. Class-III ADH is remarkably ineffective in oxidizing ethanol. Required for clearance of cellular formaldehyde, a cytotoxic and carcinogenic metabolite that induces DNA damage. Also acts as a S-nitroso-glutathione reductase by catalyzing the NADH-dependent reduction of S-nitrosoglutathione, thereby regulating protein S-nitrosylation. The protein is Alcohol dehydrogenase class-3 of Mus musculus (Mouse).